A 349-amino-acid polypeptide reads, in one-letter code: Probable formaldehyde dehydrogenase AdhA (349 aa).

7 residues coordinate Zn(2+): Cys-44, His-66, Cys-97, Cys-100, Cys-103, Cys-111, and Cys-161.

Belongs to the zinc-containing alcohol dehydrogenase family. Requires Zn(2+) as cofactor.

In terms of biological role, functions in the protection against aldehyde-stress. In Bacillus subtilis (strain 168), this protein is Probable formaldehyde dehydrogenase AdhA (adhA).